A 394-amino-acid polypeptide reads, in one-letter code: ATP phosphoribosyltransferase regulatory subunit (394 aa).

Belongs to the class-II aminoacyl-tRNA synthetase family. HisZ subfamily. Heteromultimer composed of HisG and HisZ subunits.

Its subcellular location is the cytoplasm. It participates in amino-acid biosynthesis; L-histidine biosynthesis; L-histidine from 5-phospho-alpha-D-ribose 1-diphosphate: step 1/9. Its function is as follows. Required for the first step of histidine biosynthesis. May allow the feedback regulation of ATP phosphoribosyltransferase activity by histidine. The polypeptide is ATP phosphoribosyltransferase regulatory subunit (Pseudomonas paraeruginosa (strain DSM 24068 / PA7) (Pseudomonas aeruginosa (strain PA7))).